Reading from the N-terminus, the 339-residue chain is Anthranilate phosphoribosyltransferase (339 aa).

5-phospho-alpha-D-ribose 1-diphosphate is bound by residues Gly81, 84–85 (GD), Thr89, 91–94 (NIST), 109–117 (KHGNRNLSS), and Thr121. Anthranilate is bound at residue Gly81. Residue Ser93 participates in Mg(2+) binding. Asn112 provides a ligand contact to anthranilate. Arg167 contributes to the anthranilate binding site. Positions 226 and 227 each coordinate Mg(2+).

The protein belongs to the anthranilate phosphoribosyltransferase family. As to quaternary structure, homodimer. It depends on Mg(2+) as a cofactor.

It catalyses the reaction N-(5-phospho-beta-D-ribosyl)anthranilate + diphosphate = 5-phospho-alpha-D-ribose 1-diphosphate + anthranilate. It participates in amino-acid biosynthesis; L-tryptophan biosynthesis; L-tryptophan from chorismate: step 2/5. Functionally, catalyzes the transfer of the phosphoribosyl group of 5-phosphorylribose-1-pyrophosphate (PRPP) to anthranilate to yield N-(5'-phosphoribosyl)-anthranilate (PRA). The polypeptide is Anthranilate phosphoribosyltransferase (Ruegeria pomeroyi (strain ATCC 700808 / DSM 15171 / DSS-3) (Silicibacter pomeroyi)).